A 192-amino-acid polypeptide reads, in one-letter code: Cytochrome c oxidase assembly protein CtaG (192 aa).

Residues 1 to 9 (MSLSPHQKT) lie on the Cytoplasmic side of the membrane. The chain crosses the membrane as a helical; Signal-anchor for type II membrane protein span at residues 10-30 (AGWLVGVVVVMGAASFAAVPF). The Periplasmic segment spans residues 31-192 (YDWFCRVTGF…AARPAGIDVN (162 aa)).

Belongs to the COX11/CtaG family.

Its subcellular location is the cell inner membrane. Its function is as follows. Exerts its effect at some terminal stage of cytochrome c oxidase synthesis, probably by being involved in the insertion of the copper B into subunit I. The chain is Cytochrome c oxidase assembly protein CtaG from Cereibacter sphaeroides (strain ATCC 17025 / ATH 2.4.3) (Rhodobacter sphaeroides).